The chain runs to 360 residues: Probable L-asparaginase 1 (360 aa).

The N-terminal stretch at 1–16 (MWRSIISFLFFSVALC) is a signal peptide. 3 N-linked (GlcNAc...) asparagine glycosylation sites follow: Asn27, Asn35, and Asn40. Positions 39–359 (PNVTIFAMGG…QNITDIFSLE (321 aa)) constitute an Asparaginase/glutaminase domain. Thr49 functions as the O-isoaspartyl threonine intermediate in the catalytic mechanism. Asn82 carries an N-linked (GlcNAc...) asparagine glycan. Ser96 contacts substrate. A glycan (N-linked (GlcNAc...) asparagine) is linked at Asn106. 129–130 (TD) is a binding site for substrate. Asn144, Asn179, Asn246, Asn302, and Asn351 each carry an N-linked (GlcNAc...) asparagine glycan.

It belongs to the asparaginase 1 family.

It localises to the secreted. Its subcellular location is the cell wall. It carries out the reaction L-asparagine + H2O = L-aspartate + NH4(+). The protein is Probable L-asparaginase 1 of Schizosaccharomyces pombe (strain 972 / ATCC 24843) (Fission yeast).